The chain runs to 380 residues: Tryptophan 2,3-dioxygenase (380 aa).

Residues 57–61 (FIITH) and R128 each bind substrate. H313 is a binding site for heme. T328 contacts substrate.

It belongs to the tryptophan 2,3-dioxygenase family. In terms of assembly, homotetramer. Dimer of dimers. Heme is required as a cofactor.

The enzyme catalyses L-tryptophan + O2 = N-formyl-L-kynurenine. Its pathway is amino-acid degradation; L-tryptophan degradation via kynurenine pathway; L-kynurenine from L-tryptophan: step 1/2. The protein operates within pigment biosynthesis; ommochrome biosynthesis. Heme-dependent dioxygenase that catalyzes the oxidative cleavage of the L-tryptophan (L-Trp) pyrrole ring and converts L-tryptophan to N-formyl-L-kynurenine. Catalyzes the oxidative cleavage of the indole moiety. The protein is Tryptophan 2,3-dioxygenase of Drosophila persimilis (Fruit fly).